We begin with the raw amino-acid sequence, 810 residues long: Protein kinase C-binding protein NELL1 (810 aa).

The first 21 residues, 1 to 21 (MPMDLILVVWFCVCTARTVVG), serve as a signal peptide directing secretion. Asn40, Asn53, Asn83, Asn224, Asn294, and Asn372 each carry an N-linked (GlcNAc...) asparagine glycan. One can recognise a Laminin G-like domain in the interval 64–227 (EREIHAAPHV…TQCPNLNHTC (164 aa)). The VWFC 1 domain maps to 271 to 332 (KTCQVSGLLY…IAGQCCKVCR (62 aa)). 3 cysteine pairs are disulfide-bonded: Cys395–Cys407, Cys401–Cys416, and Cys418–Cys432. Residues Asp434, Ile435, and Glu437 each contribute to the Ca(2+) site. Positions 434-475 (DIDECAAKMHYCHANTVCVNLPGLYRCDCVPGYIRVDDFSCT) constitute an EGF-like 1; calcium-binding domain. Cystine bridges form between Cys438-Cys451, Cys445-Cys460, Cys462-Cys474, Cys480-Cys493, Cys487-Cys502, Cys504-Cys515, Cys519-Cys529, Cys523-Cys535, Cys537-Cys546, Cys553-Cys566, Cys560-Cys575, Cys577-Cys594, Cys600-Cys613, Cys607-Cys622, and Cys624-Cys630. Ca(2+) is bound by residues Asn453, Leu454, and Leu457. The EGF-like 2; calcium-binding domain maps to 476–516 (EHDECGSGQHNCDENAICTNTVQGHSCTCKPGYVGNGTICR). Asn511 carries an N-linked (GlcNAc...) asparagine glycan. An EGF-like 3 domain is found at 517 to 547 (AFCEEGCRYGGTCVAPNKCVCPSGFTGSHCE). Residues 549–587 (DIDECSEGIIECHNHSRCVNLPGWYHCECRSGFHDDGTY) enclose the EGF-like 4; calcium-binding domain. An N-linked (GlcNAc...) asparagine glycan is attached at Asn562. The EGF-like 5; calcium-binding domain occupies 596 to 631 (DIDECALRTHTCWNDSACINLAGGFDCLCPSGPSCS). Asn609 carries N-linked (GlcNAc...) asparagine glycosylation. Positions 692–750 (SQCLDQNGHKLYRSGDNWTHSCQQCRCLEGEVDCWPLTCPNLSCEYTAILEGECCPRCV) constitute a VWFC 2 domain. Residues Asn708, Asn732, and Asn758 are each glycosylated (N-linked (GlcNAc...) asparagine).

In terms of assembly, homotrimer. Binds to PKC beta-1. Interacts with ATRAID; the interaction promotes osteoblast cell differentiation and mineralization. Interacts with ROBO3.

The protein resides in the cytoplasm. Its subcellular location is the nucleus envelope. It localises to the secreted. Plays a role in the control of cell growth and differentiation. Promotes osteoblast cell differentiation and terminal mineralization. In Homo sapiens (Human), this protein is Protein kinase C-binding protein NELL1 (NELL1).